Reading from the N-terminus, the 142-residue chain is Small ribosomal subunit protein uS12 (142 aa).

This sequence belongs to the universal ribosomal protein uS12 family. As to quaternary structure, part of the 30S ribosomal subunit.

In terms of biological role, with S4 and S5 plays an important role in translational accuracy. Located at the interface of the 30S and 50S subunits. This is Small ribosomal subunit protein uS12 from Methanospirillum hungatei JF-1 (strain ATCC 27890 / DSM 864 / NBRC 100397 / JF-1).